Reading from the N-terminus, the 523-residue chain is Bifunctional purine biosynthesis protein PurH (523 aa).

Residues 1 to 150 (MSDVVPVRNA…KNHGDVAIAT (150 aa)) form the MGS-like domain.

The protein belongs to the PurH family.

It catalyses the reaction (6R)-10-formyltetrahydrofolate + 5-amino-1-(5-phospho-beta-D-ribosyl)imidazole-4-carboxamide = 5-formamido-1-(5-phospho-D-ribosyl)imidazole-4-carboxamide + (6S)-5,6,7,8-tetrahydrofolate. The catalysed reaction is IMP + H2O = 5-formamido-1-(5-phospho-D-ribosyl)imidazole-4-carboxamide. The protein operates within purine metabolism; IMP biosynthesis via de novo pathway; 5-formamido-1-(5-phospho-D-ribosyl)imidazole-4-carboxamide from 5-amino-1-(5-phospho-D-ribosyl)imidazole-4-carboxamide (10-formyl THF route): step 1/1. It functions in the pathway purine metabolism; IMP biosynthesis via de novo pathway; IMP from 5-formamido-1-(5-phospho-D-ribosyl)imidazole-4-carboxamide: step 1/1. This Rhodopirellula baltica (strain DSM 10527 / NCIMB 13988 / SH1) protein is Bifunctional purine biosynthesis protein PurH.